A 318-amino-acid polypeptide reads, in one-letter code: L-malyl-CoA/beta-methylmalyl-CoA lyase (318 aa).

F19, R24, K30, and R76 together coordinate substrate. Positions 141 and 168 each coordinate Mg(2+). Substrate is bound by residues 167-168 (AD) and 251-252 (IH).

This sequence belongs to the HpcH/HpaI aldolase family. Homohexamer. Dimer of trimers. The cofactor is Mg(2+). Mn(2+) serves as cofactor.

It carries out the reaction (S)-malyl-CoA = glyoxylate + acetyl-CoA. It catalyses the reaction (2R,3S)-beta-methylmalyl-CoA = propanoyl-CoA + glyoxylate. In terms of biological role, involved in the ethylmalonyl-CoA pathway for acetate assimilation. Catalyzes the reversible condensation of glyoxylate and acetyl-CoA to L-malyl-CoA and the reversible condensation of glyoxylate and propionyl-CoA to yield beta-methylmalyl-CoA. This chain is L-malyl-CoA/beta-methylmalyl-CoA lyase, found in Cereibacter sphaeroides (strain ATCC 17025 / ATH 2.4.3) (Rhodobacter sphaeroides).